The sequence spans 532 residues: uncharacterized protein (532 aa).

13 helical membrane passes run 13-33 (MSLL…QTLL), 53-73 (WLTT…AFLI), 80-100 (SLFL…GIAP), 111-131 (IQAV…LLIF), 142-162 (IFGL…GWII), 169-189 (IMFY…FFIF), 203-223 (LGAI…SEAG), 231-251 (IVLS…VQQL), 273-293 (VINI…PIYL), 306-326 (LLLL…GILF), 334-354 (LAII…QLTI), 361-381 (IMLI…PVMT), and 483-503 (INDA…LSIF).

Belongs to the major facilitator superfamily. EmrB family.

It localises to the cell membrane. This is an uncharacterized protein from Bacillus subtilis (strain 168).